The sequence spans 186 residues: Peptidyl-tRNA hydrolase (186 aa).

Residue Tyr14 participates in tRNA binding. His19 serves as the catalytic Proton acceptor. Positions 64, 66, and 112 each coordinate tRNA.

Belongs to the PTH family. As to quaternary structure, monomer.

It localises to the cytoplasm. The enzyme catalyses an N-acyl-L-alpha-aminoacyl-tRNA + H2O = an N-acyl-L-amino acid + a tRNA + H(+). Functionally, hydrolyzes ribosome-free peptidyl-tRNAs (with 1 or more amino acids incorporated), which drop off the ribosome during protein synthesis, or as a result of ribosome stalling. Its function is as follows. Catalyzes the release of premature peptidyl moieties from peptidyl-tRNA molecules trapped in stalled 50S ribosomal subunits, and thus maintains levels of free tRNAs and 50S ribosomes. The chain is Peptidyl-tRNA hydrolase from Bacillus cereus (strain Q1).